We begin with the raw amino-acid sequence, 156 residues long: Small ribosomal subunit protein uS7 (156 aa).

Belongs to the universal ribosomal protein uS7 family. As to quaternary structure, part of the 30S ribosomal subunit. Contacts proteins S9 and S11.

Its function is as follows. One of the primary rRNA binding proteins, it binds directly to 16S rRNA where it nucleates assembly of the head domain of the 30S subunit. Is located at the subunit interface close to the decoding center, probably blocks exit of the E-site tRNA. This is Small ribosomal subunit protein uS7 from Prochlorococcus marinus subsp. pastoris (strain CCMP1986 / NIES-2087 / MED4).